A 295-amino-acid chain; its full sequence is Dipeptide transport system permease protein DppC (295 aa).

A run of 7 helical transmembrane segments spans residues 27 to 47 (ALIG…APYI), 97 to 117 (VFAG…LGLI), 132 to 152 (LIDI…VSIL), 156 to 178 (LANA…TRAA), 202 to 222 (MFIV…TMGI), 226 to 246 (ILEL…TPEL), and 262 to 282 (WLVT…NLMG). The ABC transmembrane type-1 domain occupies 93-282 (TRISVFAGFI…SLVLAFNLMG (190 aa)).

The protein belongs to the binding-protein-dependent transport system permease family. OppBC subfamily.

It localises to the cell inner membrane. Functionally, part of the ABC transporter DppBCDF involved in dipeptide transport. Responsible for the translocation of the substrate across the membrane. The sequence is that of Dipeptide transport system permease protein DppC (dppC) from Haemophilus influenzae (strain ATCC 51907 / DSM 11121 / KW20 / Rd).